Reading from the N-terminus, the 410-residue chain is Protein CNPPD1 (410 aa).

A helical transmembrane segment spans residues 233–253 (CLLAVAYVSSVALAVASVAVI).

This sequence belongs to the CNPPD1 family.

The protein resides in the membrane. The sequence is that of Protein CNPPD1 (CNPPD1) from Homo sapiens (Human).